Here is a 138-residue protein sequence, read N- to C-terminus: Nucleoside diphosphate kinase (138 aa).

ATP-binding residues include Lys-9, Phe-57, Arg-85, Thr-91, Arg-102, and Asn-112. The active-site Pros-phosphohistidine intermediate is His-115.

Belongs to the NDK family. Homotetramer. The cofactor is Mg(2+).

It is found in the cytoplasm. The catalysed reaction is a 2'-deoxyribonucleoside 5'-diphosphate + ATP = a 2'-deoxyribonucleoside 5'-triphosphate + ADP. It catalyses the reaction a ribonucleoside 5'-diphosphate + ATP = a ribonucleoside 5'-triphosphate + ADP. Functionally, major role in the synthesis of nucleoside triphosphates other than ATP. The ATP gamma phosphate is transferred to the NDP beta phosphate via a ping-pong mechanism, using a phosphorylated active-site intermediate. This is Nucleoside diphosphate kinase from Deinococcus geothermalis (strain DSM 11300 / CIP 105573 / AG-3a).